Reading from the N-terminus, the 111-residue chain is uncharacterized protein (111 aa).

A helical membrane pass occupies residues 18–41 (FFYFFFISFYTLWIVFFLLHLSFF).

Its subcellular location is the membrane. This is an uncharacterized protein from Saccharomyces cerevisiae (strain ATCC 204508 / S288c) (Baker's yeast).